Here is a 308-residue protein sequence, read N- to C-terminus: Electron transfer flavoprotein subunit alpha (308 aa).

An FAD-binding site is contributed by 252-280; it reads LYVAVGISGAIQHLAGMKDSKVIVAINKD.

The protein belongs to the ETF alpha-subunit/FixB family. Heterodimer of an alpha and a beta subunit. It depends on FAD as a cofactor.

In terms of biological role, the electron transfer flavoprotein serves as a specific electron acceptor for other dehydrogenases. It transfers the electrons to the main respiratory chain via ETF-ubiquinone oxidoreductase (ETF dehydrogenase). In Paracoccus denitrificans, this protein is Electron transfer flavoprotein subunit alpha (etfA).